The chain runs to 480 residues: tRNA-2-methylthio-N(6)-dimethylallyladenosine synthase (480 aa).

Positions 29–145 constitute an MTTase N-terminal domain; that stretch reads GSFWIQTFGC…LEALLTQVDN (117 aa). [4Fe-4S] cluster-binding residues include C38, C74, C108, C180, C184, and C187. The region spanning 166–403 is the Radical SAM core domain; the sequence is RDSTICAWVN…NALVERVALQ (238 aa). Residues 406–474 form the TRAM domain; sequence SRYSGKVEQV…AFSLSGTPCD (69 aa).

The protein belongs to the methylthiotransferase family. MiaB subfamily. As to quaternary structure, monomer. Requires [4Fe-4S] cluster as cofactor.

The protein resides in the cytoplasm. The catalysed reaction is N(6)-dimethylallyladenosine(37) in tRNA + (sulfur carrier)-SH + AH2 + 2 S-adenosyl-L-methionine = 2-methylsulfanyl-N(6)-dimethylallyladenosine(37) in tRNA + (sulfur carrier)-H + 5'-deoxyadenosine + L-methionine + A + S-adenosyl-L-homocysteine + 2 H(+). Its function is as follows. Catalyzes the methylthiolation of N6-(dimethylallyl)adenosine (i(6)A), leading to the formation of 2-methylthio-N6-(dimethylallyl)adenosine (ms(2)i(6)A) at position 37 in tRNAs that read codons beginning with uridine. This chain is tRNA-2-methylthio-N(6)-dimethylallyladenosine synthase, found in Prochlorococcus marinus (strain MIT 9303).